Consider the following 272-residue polypeptide: Alpha-tubulin N-acetyltransferase (272 aa).

Residues 1 to 186 (MEFRFNCHPL…NNFVVYEGFF (186 aa)) form the N-acetyltransferase domain. Acetyl-CoA-binding positions include 120–133 (FYVH…GLGR) and 156–165 (SEKLLGFLQK). The interval 216–244 (TTVGEQRRSSSQTRQQVVSPPVVQQPPVG) is disordered. Residues 224-244 (SSSQTRQQVVSPPVVQQPPVG) are compositionally biased toward low complexity.

The protein belongs to the acetyltransferase ATAT1 family.

The catalysed reaction is L-lysyl-[alpha-tubulin] + acetyl-CoA = N(6)-acetyl-L-lysyl-[alpha-tubulin] + CoA + H(+). Specifically acetylates 'Lys-40' in alpha-tubulin on the lumenal side of microtubules. Promotes microtubule destabilization and accelerates microtubule dynamics; this activity may be independent of acetylation activity. Acetylates alpha-tubulin with a slow enzymatic rate, due to a catalytic site that is not optimized for acetyl transfer. Enters the microtubule through each end and diffuses quickly throughout the lumen of microtubules. Acetylates only long/old microtubules because of its slow acetylation rate since it does not have time to act on dynamically unstable microtubules before the enzyme is released. The protein is Alpha-tubulin N-acetyltransferase of Aedes aegypti (Yellowfever mosquito).